The sequence spans 279 residues: MKRLGAHVSIAGGIENAPLNARAIGATAFALFTKNQRQWKSPPLLPASIEAFRQNCADGGFEMRHILPHDSYLINLGNPDPLKLERSRAAFIDEMQRAESLGLELLNFHPGSHLNLSTPDECLRRIADSINMALEHSSCVTAVIENTAGQGTNLGNRFEQLAALIEMTDDKSRVGVCLDTCHLFAAGYDLATADAAGETFREFDRVVGMRYLRGMHLNDALHPVGSRLDRHACVGKGKIGLDAFRLVMQSPAFEEIPLILETPDSDGWAEEIRMLYGLQ.

Zn(2+) contacts are provided by histidine 69, histidine 109, glutamate 145, aspartate 179, histidine 182, histidine 216, aspartate 229, histidine 231, and glutamate 261.

It belongs to the AP endonuclease 2 family. Requires Zn(2+) as cofactor.

The catalysed reaction is Endonucleolytic cleavage to 5'-phosphooligonucleotide end-products.. In terms of biological role, endonuclease IV plays a role in DNA repair. It cleaves phosphodiester bonds at apurinic or apyrimidinic (AP) sites, generating a 3'-hydroxyl group and a 5'-terminal sugar phosphate. The chain is Probable endonuclease 4 from Chlorobium luteolum (strain DSM 273 / BCRC 81028 / 2530) (Pelodictyon luteolum).